Consider the following 93-residue polypeptide: Large ribosomal subunit protein uL23c (93 aa).

Belongs to the universal ribosomal protein uL23 family. As to quaternary structure, part of the 50S ribosomal subunit.

Its subcellular location is the plastid. The protein resides in the chloroplast. In terms of biological role, binds to 23S rRNA. This is Large ribosomal subunit protein uL23c (rpl23) from Adiantum capillus-veneris (Maidenhair fern).